Consider the following 238-residue polypeptide: ATP-dependent Clp protease ATP-binding subunit CLPT1, chloroplastic (238 aa).

A chloroplast-targeting transit peptide spans Met-1–Ala-64. Positions Ile-83–Asp-228 constitute a Clp R domain. 2 repeat regions span residues Trp-86 to Ser-151 and Leu-163 to Asp-228.

It belongs to the ClpA/ClpB family. As to quaternary structure, monomer and homodimer. Binds to the CLP3-6 ring (P-ring). The dimers monomerize before association to the P-ring. Component of the chloroplastic Clp protease core complex which consist of at least 16 proteins: CLPP4 (3 copies), CLPP5 (3 copies), CLPR4 (2 copies), ClpP1 (1 copy), CLPP6 (1 copy), CLPR2 (1 copy), CLPT1 (1 copy), CLPT2 (1 copy) and 3 copies of CLPP3 and/or CLPR1 and/or CLPR3. Interacts with CLPC2 and CLPD. Interacts with CPN21. No interactions with CLPS1.

The protein localises to the plastid. Its subcellular location is the chloroplast. Accessory protein regulating the assembly of the plastidial Clp protease system. CLPT1 first binds to the heptameric P-ring containing the CLP3-6 subunits followed by CLPT2, and only then does the P-ring combine with the R-ring composed of the clpP1 and CLPR1-4 subunits. Once the core complex is fully assembled, it then associates to the CLPC chaperone partner to form the functional protease. CLPT1 and CLPT2 are partially redundant. This is ATP-dependent Clp protease ATP-binding subunit CLPT1, chloroplastic from Arabidopsis thaliana (Mouse-ear cress).